A 364-amino-acid chain; its full sequence is Paraneoplastic antigen Ma2 (364 aa).

The residue at position 2 (Ala2) is an N-acetylalanine. A compositionally biased stretch (acidic residues) spans 335–351 (EEEEASFENESIEEPEE). Residues 335–364 (EEEEASFENESIEEPEERDGYGRWNHEGDD) are disordered. Over residues 352 to 364 (RDGYGRWNHEGDD) the composition is skewed to basic and acidic residues.

Belongs to the PNMA family. As to expression, brain-specific. In some cancer patients, specifically expressed by testicular tumor cells.

It localises to the nucleus. Its subcellular location is the nucleolus. The protein is Paraneoplastic antigen Ma2 (PNMA2) of Homo sapiens (Human).